The sequence spans 149 residues: SKP1-like protein 14 (149 aa).

The interaction with the F-box domain of F-box proteins stretch occupies residues 91–149; it reads LLAANYLNIKGLLDLSAQTVADRIKDKTPEEIREIFNIENDFTPEEEAAVRKENAWAFE.

The protein belongs to the SKP1 family. In terms of assembly, part of a SCF (SKP1-cullin-F-box) protein ligase complex. Interacts with CPR1/CPR30, At3g61590, At4g39550 and At5g49610. In terms of tissue distribution, restricted to inflorescences, pollen and leaves.

It localises to the nucleus. Its pathway is protein modification; protein ubiquitination. In terms of biological role, involved in ubiquitination and subsequent proteasomal degradation of target proteins. Together with CUL1, RBX1 and a F-box protein, it forms a SCF E3 ubiquitin ligase complex. The functional specificity of this complex depends on the type of F-box protein. In the SCF complex, it serves as an adapter that links the F-box protein to CUL1. The polypeptide is SKP1-like protein 14 (ASK14) (Arabidopsis thaliana (Mouse-ear cress)).